A 202-amino-acid polypeptide reads, in one-letter code: Recombination protein RecR (202 aa).

A C4-type zinc finger spans residues 58–73 (CANCGNLTDKKLCDIC). The Toprim domain occupies 81-178 (SVITVVEDSM…KVSRIAMGVP (98 aa)).

Belongs to the RecR family.

Its function is as follows. May play a role in DNA repair. It seems to be involved in an RecBC-independent recombinational process of DNA repair. It may act with RecF and RecO. This chain is Recombination protein RecR, found in Finegoldia magna (strain ATCC 29328 / DSM 20472 / WAL 2508) (Peptostreptococcus magnus).